Consider the following 326-residue polypeptide: Pectate lyase plyB (326 aa).

The N-terminal stretch at 1–15 (MRFTPLFLLAAVAIA) is a signal peptide. Ca(2+) contacts are provided by Asp133, Asp162, and Asp166. Arg219 is an active-site residue.

It belongs to the polysaccharide lyase 1 family. Ca(2+) is required as a cofactor.

The protein resides in the secreted. The enzyme catalyses Eliminative cleavage of (1-&gt;4)-alpha-D-galacturonan to give oligosaccharides with 4-deoxy-alpha-D-galact-4-enuronosyl groups at their non-reducing ends.. It functions in the pathway glycan metabolism; pectin degradation; 2-dehydro-3-deoxy-D-gluconate from pectin: step 2/5. Functionally, pectinolytic enzyme consist of four classes of enzymes: pectin lyase, polygalacturonase, pectin methylesterase and rhamnogalacturonase. Among pectinolytic enzymes, pectin lyase is the most important in depolymerization of pectin, since it cleaves internal glycosidic bonds of highly methylated pectins. This is Pectate lyase plyB (plyB) from Emericella nidulans (strain FGSC A4 / ATCC 38163 / CBS 112.46 / NRRL 194 / M139) (Aspergillus nidulans).